The following is a 413-amino-acid chain: Serine/threonine-protein phosphatase 2A 55 kDa regulatory subunit B beta isoform (413 aa).

WD repeat units follow at residues 1-31 (EFNH…KNQV), 57-98 (EIEE…KRPE), 141-179 (AHTY…QSFN), and 190-230 (ELTE…LCDR). A Phosphoserine modification is found at Ser-245. 3 WD repeats span residues 249–287 (EIIS…RPIE), 304–345 (ENDC…DVTL), and 380–412 (DFSK…QDKV). Residue Tyr-265 is modified to Phosphotyrosine. At Thr-268 the chain carries Phosphothreonine.

The protein belongs to the phosphatase 2A regulatory subunit B family. In terms of assembly, PP2A consists of a common heterodimeric core enzyme, composed of a 36 kDa catalytic subunit (subunit C) and a 65 kDa constant regulatory subunit (PR65 or subunit A), that associates with a variety of regulatory subunits. Proteins that associate with the core dimer include three families of regulatory subunits B (the R2/B/PR55/B55, R3/B''/PR72/PR130/PR59 and R5/B'/B56 families), the 48 kDa variable regulatory subunit, viral proteins, and cell signaling molecules. Interacts with TOMM22. Interacts with IER5 (via N- and C-terminal regions). Brain.

It localises to the cytoplasm. It is found in the cytoskeleton. Its subcellular location is the membrane. The B regulatory subunit might modulate substrate selectivity and catalytic activity, and might also direct the localization of the catalytic enzyme to a particular subcellular compartment. This chain is Serine/threonine-protein phosphatase 2A 55 kDa regulatory subunit B beta isoform (PPP2R2B), found in Oryctolagus cuniculus (Rabbit).